Here is a 393-residue protein sequence, read N- to C-terminus: Digeranylgeranylglycerophospholipid reductase 2 (393 aa).

Residues Asp-33, Cys-44, Ala-45, Gly-47, Arg-100, Ala-124, Asp-280, Gly-292, and Ile-293 each contribute to the FAD site.

This sequence belongs to the geranylgeranyl reductase family. DGGGPL reductase subfamily. The cofactor is FAD.

It carries out the reaction a 2,3-bis-O-phytanyl-sn-glycerol 1-phospholipid + 8 A = a 2,3-bis-O-(geranylgeranyl)-sn-glycerol 1-phospholipid + 8 AH2. It catalyses the reaction 2,3-bis-O-(phytanyl)-sn-glycerol 1-phosphate + 8 A = 2,3-bis-O-(geranylgeranyl)-sn-glycerol 1-phosphate + 8 AH2. The catalysed reaction is CDP-2,3-bis-O-(geranylgeranyl)-sn-glycerol + 8 AH2 = CDP-2,3-bis-O-(phytanyl)-sn-glycerol + 8 A. The enzyme catalyses archaetidylserine + 8 AH2 = 2,3-bis-O-phytanyl-sn-glycero-3-phospho-L-serine + 8 A. The protein operates within membrane lipid metabolism; glycerophospholipid metabolism. Is involved in the reduction of 2,3-digeranylgeranylglycerophospholipids (unsaturated archaeols) into 2,3-diphytanylglycerophospholipids (saturated archaeols) in the biosynthesis of archaeal membrane lipids. Catalyzes the formation of archaetidic acid (2,3-di-O-phytanyl-sn-glyceryl phosphate) from 2,3-di-O-geranylgeranylglyceryl phosphate (DGGGP) via the hydrogenation of each double bond of the isoprenoid chains. Is also probably able to reduce double bonds of geranyl groups in CDP-2,3-bis-O-(geranylgeranyl)-sn-glycerol and archaetidylserine, thus acting at various stages in the biosynthesis of archaeal membrane lipids. This Methanosphaera stadtmanae (strain ATCC 43021 / DSM 3091 / JCM 11832 / MCB-3) protein is Digeranylgeranylglycerophospholipid reductase 2.